Consider the following 233-residue polypeptide: Small ribosomal subunit protein uS3 (233 aa).

A KH type-2 domain is found at 39–107 (VRKYLTKELE…PAQINIAEVR (69 aa)). The disordered stretch occupies residues 214-233 (VEQPEKPSAQPKKQQRKGRK).

Belongs to the universal ribosomal protein uS3 family. Part of the 30S ribosomal subunit. Forms a tight complex with proteins S10 and S14.

In terms of biological role, binds the lower part of the 30S subunit head. Binds mRNA in the 70S ribosome, positioning it for translation. The protein is Small ribosomal subunit protein uS3 of Pectobacterium atrosepticum (strain SCRI 1043 / ATCC BAA-672) (Erwinia carotovora subsp. atroseptica).